A 631-amino-acid chain; its full sequence is Chaperone protein DnaK (631 aa).

Residue T198 is modified to Phosphothreonine; by autocatalysis. The tract at residues 598–631 (YSAQQGGEQPGAAKKDDVVDAEFTEVDDDKKKSA) is disordered.

This sequence belongs to the heat shock protein 70 family.

Its function is as follows. Acts as a chaperone. The protein is Chaperone protein DnaK of Azorhizobium caulinodans (strain ATCC 43989 / DSM 5975 / JCM 20966 / LMG 6465 / NBRC 14845 / NCIMB 13405 / ORS 571).